The chain runs to 81 residues: Putative defensin-like protein 26 (81 aa).

The signal sequence occupies residues 1–21; the sequence is MASLKVFSFALLIVLTFSVIG. Intrachain disulfides connect C33–C81 and C52–C77.

The protein belongs to the DEFL family.

It is found in the secreted. The protein is Putative defensin-like protein 26 of Arabidopsis thaliana (Mouse-ear cress).